A 109-amino-acid chain; its full sequence is Nucleoid-associated protein VS_0917 (109 aa).

Disordered regions lie at residues 1–22 and 88–109; these read MFGK…ERMQ and QKEK…KMPF. The segment covering 9–18 has biased composition (low complexity); that stretch reads NMMKQAQQMQ.

This sequence belongs to the YbaB/EbfC family. In terms of assembly, homodimer.

Its subcellular location is the cytoplasm. It is found in the nucleoid. Its function is as follows. Binds to DNA and alters its conformation. May be involved in regulation of gene expression, nucleoid organization and DNA protection. In Vibrio atlanticus (strain LGP32) (Vibrio splendidus (strain Mel32)), this protein is Nucleoid-associated protein VS_0917.